Here is a 174-residue protein sequence, read N- to C-terminus: Small ribosomal subunit protein uS5 (174 aa).

Residues 19 to 82 (LREKMVAINR…DEARRKMVKV (64 aa)) form the S5 DRBM domain.

The protein belongs to the universal ribosomal protein uS5 family. Part of the 30S ribosomal subunit. Contacts proteins S4 and S8.

With S4 and S12 plays an important role in translational accuracy. Its function is as follows. Located at the back of the 30S subunit body where it stabilizes the conformation of the head with respect to the body. In Azoarcus sp. (strain BH72), this protein is Small ribosomal subunit protein uS5.